The sequence spans 94 residues: Integration host factor subunit beta (94 aa).

Belongs to the bacterial histone-like protein family. In terms of assembly, heterodimer of an alpha and a beta chain.

This protein is one of the two subunits of integration host factor, a specific DNA-binding protein that functions in genetic recombination as well as in transcriptional and translational control. This is Integration host factor subunit beta from Salmonella arizonae (strain ATCC BAA-731 / CDC346-86 / RSK2980).